Consider the following 238-residue polypeptide: GATA transcription factor 7 (238 aa).

Positions 24 to 64 (TSLESSSSQRKEDEQEREKFKSFSDQSTRLSPPEDLLSFPG) are disordered. Basic and acidic residues predominate over residues 32-45 (QRKEDEQEREKFKS). Residues 112-119 (KPRSKRRR) carry the Nuclear localization signal motif. Residues 160–214 (QQLRRCCSHCGVQKTPQWRMGPLGAKTLCNACGVRFKSGRLLPEYRPACSPTFTN) form a GATA-type zinc finger.

This sequence belongs to the type IV zinc-finger family. Class A subfamily.

The protein resides in the nucleus. In terms of biological role, transcriptional activator that specifically binds 5'-GATA-3' or 5'-GAT-3' motifs within gene promoters. May be involved in the regulation of some light-responsive genes. This Arabidopsis thaliana (Mouse-ear cress) protein is GATA transcription factor 7 (GATA7).